The following is a 332-amino-acid chain: Chitin synthase export chaperone (332 aa).

7 helical membrane passes run 51–71 (CAND…IIHV), 86–106 (VFYI…GVTA), 121–141 (GLVS…FQLY), 149–169 (VWLL…VSLL), 182–202 (PIGI…VYVV), 218–238 (LGDI…LYVF), and 248–268 (HYID…MMVY).

Belongs to the CHS7 family. As to quaternary structure, interacts with CHS3.

Its subcellular location is the endoplasmic reticulum membrane. Chaperone required for the export of the chitin synthase CHS3 from the endoplasmic reticulum. The polypeptide is Chitin synthase export chaperone (CHS7) (Phaeosphaeria nodorum (strain SN15 / ATCC MYA-4574 / FGSC 10173) (Glume blotch fungus)).